Reading from the N-terminus, the 453-residue chain is MSFIPNTEAEALSALFSRRSVLGATAAGGLLATPLAAFAQSGAASGPGEAEITVDQARQEPIPIVVPNFGAGLGEQISGVITSDLNGTGLFKVMSGSVPPGSTPDFSALKAQGARAAVAGQAVGAGSVRVEMRLWDVLSGQQLQGTAYTASNSNWRRIAHIIADVIYERMLGEKGYFDTRIAYIARTGPRHHQITRLALMDQDGANERMLTGGEWLTLTPRFNPVRDQIAFMSYANNRPRVYLFDLASGRQQILGEFAGISFAPRFSPTGGSVVLSATRGGGSDIFVVDLASRAKRQITNSNGAIDTSPCFSPDGSQIVFNSDRGGSPQLYIMSASGGAAKRISYGSGQYGSPVWSPRGDLIAFTRIGSGGFSLGVMNPDGTGERILTQGFTVDGATFCPNGRVLAFCRQSASGAGGAGFASGIGTIDITGFNERPIRISTGASDPAWSPRNG.

The signal sequence occupies residues 1-39 (MSFIPNTEAEALSALFSRRSVLGATAAGGLLATPLAAFA).

It belongs to the TolB family. The Tol-Pal system is composed of five core proteins: the inner membrane proteins TolA, TolQ and TolR, the periplasmic protein TolB and the outer membrane protein Pal. They form a network linking the inner and outer membranes and the peptidoglycan layer.

Its subcellular location is the periplasm. Part of the Tol-Pal system, which plays a role in outer membrane invagination during cell division and is important for maintaining outer membrane integrity. The polypeptide is Tol-Pal system protein TolB (Gluconobacter oxydans (strain 621H) (Gluconobacter suboxydans)).